Here is a 214-residue protein sequence, read N- to C-terminus: Large ribosomal subunit protein uL1 (214 aa).

The protein belongs to the universal ribosomal protein uL1 family. In terms of assembly, part of the 50S ribosomal subunit.

Functionally, binds directly to 23S rRNA. Probably involved in E site tRNA release. Protein L1 is also a translational repressor protein, it controls the translation of its operon by binding to its mRNA. The sequence is that of Large ribosomal subunit protein uL1 from Methanopyrus kandleri (strain AV19 / DSM 6324 / JCM 9639 / NBRC 100938).